Here is a 135-residue protein sequence, read N- to C-terminus: Large ribosomal subunit protein uL16c (135 aa).

The protein belongs to the universal ribosomal protein uL16 family. As to quaternary structure, part of the 50S ribosomal subunit.

Its subcellular location is the plastid. It is found in the chloroplast. This is Large ribosomal subunit protein uL16c from Lactuca sativa (Garden lettuce).